A 246-amino-acid chain; its full sequence is 1-(5-phosphoribosyl)-5-[(5-phosphoribosylamino)methylideneamino] imidazole-4-carboxamide isomerase (246 aa).

The active-site Proton acceptor is the Asp-8. The active-site Proton donor is the Asp-130.

The protein belongs to the HisA/HisF family.

The protein localises to the cytoplasm. It carries out the reaction 1-(5-phospho-beta-D-ribosyl)-5-[(5-phospho-beta-D-ribosylamino)methylideneamino]imidazole-4-carboxamide = 5-[(5-phospho-1-deoxy-D-ribulos-1-ylimino)methylamino]-1-(5-phospho-beta-D-ribosyl)imidazole-4-carboxamide. Its pathway is amino-acid biosynthesis; L-histidine biosynthesis; L-histidine from 5-phospho-alpha-D-ribose 1-diphosphate: step 4/9. The polypeptide is 1-(5-phosphoribosyl)-5-[(5-phosphoribosylamino)methylideneamino] imidazole-4-carboxamide isomerase (Halorhodospira halophila (strain DSM 244 / SL1) (Ectothiorhodospira halophila (strain DSM 244 / SL1))).